The chain runs to 370 residues: Peptide chain release factor 1 (370 aa).

N5-methylglutamine is present on Gln-237. Residues 286–296 show a composition bias toward basic and acidic residues; that stretch reads ERQRSARDATR. The interval 286 to 310 is disordered; sequence ERQRSARDATRKSQVGTGDRSEKIR.

This sequence belongs to the prokaryotic/mitochondrial release factor family. Post-translationally, methylated by PrmC. Methylation increases the termination efficiency of RF1.

The protein localises to the cytoplasm. Functionally, peptide chain release factor 1 directs the termination of translation in response to the peptide chain termination codons UAG and UAA. In Anaeromyxobacter dehalogenans (strain 2CP-C), this protein is Peptide chain release factor 1.